The sequence spans 365 residues: Parathion hydrolase (365 aa).

The tat-type signal signal peptide spans 1 to 29; that stretch reads MQTRRVVLKSAAAAGTLLGGLAGCASVAG. Zn(2+) contacts are provided by His55, His57, Lys169, His201, His230, and Asp301. The residue at position 169 (Lys169) is an N6-carboxylysine.

It belongs to the metallo-dependent hydrolases superfamily. Phosphotriesterase family. In terms of assembly, homodimer. The cofactor is Zn(2+). Predicted to be exported by the Tat system. The position of the signal peptide cleavage has been experimentally proven.

The protein resides in the cell membrane. It catalyses the reaction An aryl dialkyl phosphate + H2O = dialkyl phosphate + an aryl alcohol.. Its function is as follows. Has an unusual substrate specificity for synthetic organophosphate triesters and phosphorofluoridates. All of the phosphate triesters found to be substrates are synthetic compounds. The identity of any naturally occurring substrate for the enzyme is unknown. Has no detectable activity with phosphate monoesters or diesters and no activity as an esterase or protease. It catalyzes the hydrolysis of the insecticide paraoxon at a rate approaching the diffusion limit and thus appears to be optimally evolved for utilizing this synthetic substrate. The chain is Parathion hydrolase (opd) from Brevundimonas diminuta (Pseudomonas diminuta).